A 401-amino-acid chain; its full sequence is Ribosomal protein uS12 methylthiotransferase RimO (401 aa).

An MTTase N-terminal domain is found at 1–108 (MKINFINLGC…GIELLQTPKR (108 aa)). [4Fe-4S] cluster is bound by residues cysteine 10, cysteine 43, cysteine 72, cysteine 124, cysteine 128, and cysteine 131. A Radical SAM core domain is found at 110–339 (LTTKHYAYLK…FNLSQEILEE (230 aa)).

Belongs to the methylthiotransferase family. RimO subfamily. [4Fe-4S] cluster serves as cofactor.

It is found in the cytoplasm. The enzyme catalyses L-aspartate(89)-[ribosomal protein uS12]-hydrogen + (sulfur carrier)-SH + AH2 + 2 S-adenosyl-L-methionine = 3-methylsulfanyl-L-aspartate(89)-[ribosomal protein uS12]-hydrogen + (sulfur carrier)-H + 5'-deoxyadenosine + L-methionine + A + S-adenosyl-L-homocysteine + 2 H(+). Its function is as follows. Catalyzes the methylthiolation of an aspartic acid residue of ribosomal protein uS12. This is Ribosomal protein uS12 methylthiotransferase RimO from Hydrogenobaculum sp. (strain Y04AAS1).